Consider the following 201-residue polypeptide: 3-isopropylmalate dehydratase small subunit (201 aa).

It belongs to the LeuD family. LeuD type 1 subfamily. As to quaternary structure, heterodimer of LeuC and LeuD.

The catalysed reaction is (2R,3S)-3-isopropylmalate = (2S)-2-isopropylmalate. The protein operates within amino-acid biosynthesis; L-leucine biosynthesis; L-leucine from 3-methyl-2-oxobutanoate: step 2/4. Catalyzes the isomerization between 2-isopropylmalate and 3-isopropylmalate, via the formation of 2-isopropylmaleate. The chain is 3-isopropylmalate dehydratase small subunit from Methylorubrum extorquens (strain ATCC 14718 / DSM 1338 / JCM 2805 / NCIMB 9133 / AM1) (Methylobacterium extorquens).